We begin with the raw amino-acid sequence, 356 residues long: Phosphoribosyl pyrophosphate synthase-associated protein 1 (356 aa).

Met-1 is subject to N-acetylmethionine. Residue Asn-2 is modified to N-acetylproline. 2 positions are modified to phosphoserine: Ser-177 and Ser-215.

This sequence belongs to the ribose-phosphate pyrophosphokinase family. In terms of assembly, binds to PRPS1 and PRPS2. Ubiquitous.

Functionally, seems to play a negative regulatory role in 5-phosphoribose 1-diphosphate synthesis. This Homo sapiens (Human) protein is Phosphoribosyl pyrophosphate synthase-associated protein 1 (PRPSAP1).